A 1221-amino-acid chain; its full sequence is DNA replication helicase (1221 aa).

Positions Pro692–Lys701 match the Nuclear localization signal motif. Residue Gly917–Ser924 participates in ATP binding. Positions Ile967 to His981 form a DNA-binding region, H-T-H motif.

In terms of assembly, interacts with IE1 and LEF-3.

Its subcellular location is the host nucleus. The catalysed reaction is ATP + H2O = ADP + phosphate + H(+). Its function is as follows. Essential for initiation of viral DNA replication, it may contribute to other functions such as controlling the switch to the late phase and leading to the inhibition of host protein synthesis. Required for late and very late gene expression. The polypeptide is DNA replication helicase (HELI) (Lepidoptera (butterflies and moths)).